We begin with the raw amino-acid sequence, 405 residues long: MDMPSLEEQIELIERGCVDCISRDELVKKLKKSAETGIPLKVKAGFDPTAPDLHLGHTVLLQKLKQFQDLGHQVIFLIGDFTGMIGDPTGKSETRKALTVEQVAENAETYKKQVFKILDPEKTTVAFNSTWLSKLTAHEMIQLASELTVARMLEREDFKNRYESGKPISIHEFMYPLIQGYDSVALEADVEIGGTDQRFNVLMGRDLQRSRGQAPQVVLTLPLLEGLDGVNKMSKSLGNYIGITEDADSIYGKVLSVSDDLMFRYYELLSDLTTAEIADLRAQMEAGTLHPKEVKKQLARELTARYHSEEAAIAAEQNFENVFKKGGIPEDLPEYQVSLDEPIWLPKLLADAEMVKSTSEGRRMIKQGAVSLDGEKAVDESMLISPEGEVLIKVGKRRFVKVIFA.

Residues 48 to 57 carry the 'HIGH' region motif; the sequence is PTAPDLHLGH. A 'KMSKS' region motif is present at residues 232 to 236; sequence KMSKS. Lys235 serves as a coordination point for ATP. In terms of domain architecture, S4 RNA-binding spans 343–404; it reads IWLPKLLADA…GKRRFVKVIF (62 aa).

It belongs to the class-I aminoacyl-tRNA synthetase family. TyrS type 2 subfamily. In terms of assembly, homodimer.

It localises to the cytoplasm. It catalyses the reaction tRNA(Tyr) + L-tyrosine + ATP = L-tyrosyl-tRNA(Tyr) + AMP + diphosphate + H(+). Catalyzes the attachment of tyrosine to tRNA(Tyr) in a two-step reaction: tyrosine is first activated by ATP to form Tyr-AMP and then transferred to the acceptor end of tRNA(Tyr). This chain is Tyrosine--tRNA ligase, found in Desulfotalea psychrophila (strain LSv54 / DSM 12343).